The sequence spans 788 residues: Protein translocase subunit SecA (788 aa).

ATP contacts are provided by residues Gln85, 103–107, and Asp494; that span reads GEGKT.

Belongs to the SecA family. Monomer and homodimer. Part of the essential Sec protein translocation apparatus which comprises SecA, SecYEG and auxiliary proteins SecDF. Other proteins may also be involved.

The protein localises to the cell membrane. It localises to the cytoplasm. It catalyses the reaction ATP + H2O + cellular proteinSide 1 = ADP + phosphate + cellular proteinSide 2.. Its function is as follows. Part of the Sec protein translocase complex. Interacts with the SecYEG preprotein conducting channel. Has a central role in coupling the hydrolysis of ATP to the transfer of proteins into and across the cell membrane, serving as an ATP-driven molecular motor driving the stepwise translocation of polypeptide chains across the membrane. This Oenococcus oeni (strain ATCC BAA-331 / PSU-1) protein is Protein translocase subunit SecA.